The chain runs to 559 residues: Palmitoyltransferase AKR1 (559 aa).

3 ANK repeats span residues 8-38 (QGFNALHLATHSSNAMLVLYLLMAGEMPVDT), 42-71 (LGHTSLMWAAYQGDSLSVQILLKHGARVDT), and 75-104 (EGFTPLHWAVVKGNRECLSKILMAGADIKA). The next 3 helical transmembrane spans lie at 148-168 (LMVLFPWYIALPLAVAQFLFG), 192-212 (TAVFQSTAFWVGFVWLRYLLG), and 217-237 (LLWMNIAFFVGYTSALYFFYG). Positions 272–322 (HFCVSCIAQRPLRSKHCKFCNRCVAKFDHHCPWIYNCIGAKNHRAFLIFLA) constitute a DHHC domain. Cysteine 302 functions as the S-palmitoyl cysteine intermediate in the catalytic mechanism. 2 consecutive transmembrane segments (helical) span residues 316-336 (AFLIFLALFLSSVPIYAYLSF) and 373-393 (LAFWSLFQMTWPGLLFLVQLY).

This sequence belongs to the DHHC palmitoyltransferase family. AKR/ZDHHC17 subfamily.

The protein localises to the early endosome membrane. Its subcellular location is the golgi apparatus membrane. It carries out the reaction L-cysteinyl-[protein] + hexadecanoyl-CoA = S-hexadecanoyl-L-cysteinyl-[protein] + CoA. Its function is as follows. Palmitoyltransferase specific for casein kinase 1. The polypeptide is Palmitoyltransferase AKR1 (Mortierella alpina (Oleaginous fungus)).